The sequence spans 89 residues: Small ribosomal subunit protein uS15 (89 aa).

The protein belongs to the universal ribosomal protein uS15 family. As to quaternary structure, part of the 30S ribosomal subunit. Forms a bridge to the 50S subunit in the 70S ribosome, contacting the 23S rRNA.

Functionally, one of the primary rRNA binding proteins, it binds directly to 16S rRNA where it helps nucleate assembly of the platform of the 30S subunit by binding and bridging several RNA helices of the 16S rRNA. In terms of biological role, forms an intersubunit bridge (bridge B4) with the 23S rRNA of the 50S subunit in the ribosome. This is Small ribosomal subunit protein uS15 from Acinetobacter baumannii (strain AB307-0294).